A 442-amino-acid chain; its full sequence is Probable carboxypeptidase PADG_04062 (442 aa).

The first 20 residues, 1-20 (MKLQYLVALLSVQAVPPVTA), serve as a signal peptide directing secretion. N-linked (GlcNAc...) asparagine glycosylation is present at asparagine 102. Aspartate 160 lines the Zn(2+) pocket. Catalysis depends on glutamate 192, which acts as the Proton acceptor. Glutamate 193 provides a ligand contact to Zn(2+). The N-linked (GlcNAc...) asparagine glycan is linked to asparagine 343.

It belongs to the peptidase M20A family. Requires Zn(2+) as cofactor.

The protein localises to the secreted. This chain is Probable carboxypeptidase PADG_04062, found in Paracoccidioides brasiliensis (strain Pb18).